Reading from the N-terminus, the 189-residue chain is GTP cyclohydrolase 1 (189 aa).

The Zn(2+) site is built by Cys-78, His-81, and Cys-150.

The protein belongs to the GTP cyclohydrolase I family. Homomer.

It catalyses the reaction GTP + H2O = 7,8-dihydroneopterin 3'-triphosphate + formate + H(+). It participates in cofactor biosynthesis; 7,8-dihydroneopterin triphosphate biosynthesis; 7,8-dihydroneopterin triphosphate from GTP: step 1/1. The polypeptide is GTP cyclohydrolase 1 (Bacillus anthracis (strain A0248)).